The chain runs to 969 residues: MTFALGQRWISDTESDLGLGTVVAMDARTVTLMFAASEENRVYARNDAPVTRVTFNVGDVIDCQEGWSLKVEEVLEDEGLYTYFGTREDTQETAIVLREIFLSNHIRFNKPQDKLYAGQIDRMDNFVLRYRALQNQFEQHKSPMRGLCGMRAGLIPHQLYIAHEVGRRHAPRVLLADEVGLGKTIEAGMIIHQQVLSGRAERILIVVPETLQHQWLVEMMRRFNLHFSIFDEERCIEAFAEAENPFDTQQYVLCSLDFLRKSRKRFEQALEGEWDLLVVDEAHHLEWSQDKPSREYQVVEGLAERTAGVLLLTATPEQLGRESHFARLRLLDPDRFYDYDAFVEEEEQYAPVADAITSLFSGEKLPDEAKNQITELLSEQDVEPLFRIIESDSDEEAKASARQELIDNLMDRHGTGRVLFRNTRAAIKGFPKRNVHLMPMDIPQQYTTSMRVSGMIGGKMTPEARAVKNLYPEEIFQEFEGEDSSWWQFDSRVNWLLEKVKEKRSDKVLVIASRASTALQLEQALREREGIRATVFHEGMSILERDKAAAYFAQEEGGAQVLICSEIGSEGRNFQFANQLVMFDLPFNPDLLEQRIGRLDRIGQKRDIDIHVPYLKDTSQAILARWFDEGLNAFAETCPTGRAVYDKYSDALIEMLASGDVSNLDEVIEESAKMNKELKSQLEQGRDRLLEMHSNGGEKAQQIVEKISSTDGDTNLVTFALSLFDTIGLNQDDKGENALVVTPSEHMMVPSYPGLPYEGATITFDRDTALSREDMHFISWEHPMIQGGIDLLMSEGVGTSAVSLLKNKALPVGTILLELVYAVDAQAPKRSGITRFLPKTPIRMMMDARGNDLSPQVEFEGFNRQLSPVNRHLGSKLVTSVQKDIHSLIEAGDALVEQKVEEVRKQAHQDMQQSLNAELERLQALKAVNPNIRDEEIESIEEQIKELTGYINQAQVQLDSLRLIVVSHN.

The Helicase ATP-binding domain occupies 164 to 334 (EVGRRHAPRV…FARLRLLDPD (171 aa)). 177–184 (DEVGLGKT) lines the ATP pocket. A DEAH box motif is present at residues 280–283 (DEAH). The 155-residue stretch at 492–646 (RVNWLLEKVK…TCPTGRAVYD (155 aa)) folds into the Helicase C-terminal domain.

The protein belongs to the SNF2/RAD54 helicase family. RapA subfamily. In terms of assembly, interacts with the RNAP. Has a higher affinity for the core RNAP than for the holoenzyme. Its ATPase activity is stimulated by binding to RNAP.

Transcription regulator that activates transcription by stimulating RNA polymerase (RNAP) recycling in case of stress conditions such as supercoiled DNA or high salt concentrations. Probably acts by releasing the RNAP, when it is trapped or immobilized on tightly supercoiled DNA. Does not activate transcription on linear DNA. Probably not involved in DNA repair. This is RNA polymerase-associated protein RapA from Vibrio campbellii (strain ATCC BAA-1116).